The following is a 301-amino-acid chain: Small ribosomal subunit protein uS3 (301 aa).

Positions 39-107 constitute a KH type-2 domain; it reads VREYLKAKLK…PVAVNIEEVR (69 aa). The tract at residues 211-301 is disordered; it reads GESPGAKLDA…AAAADGTKTE (91 aa). The span at 224–244 shows a compositional bias: basic and acidic residues; the sequence is DEERKPRGPRRDARPGSDRPA. A compositionally biased stretch (low complexity) spans 245-257; sequence PRGARAPRAPAGG.

This sequence belongs to the universal ribosomal protein uS3 family. In terms of assembly, part of the 30S ribosomal subunit. Forms a tight complex with proteins S10 and S14.

In terms of biological role, binds the lower part of the 30S subunit head. Binds mRNA in the 70S ribosome, positioning it for translation. In Polaromonas sp. (strain JS666 / ATCC BAA-500), this protein is Small ribosomal subunit protein uS3.